Reading from the N-terminus, the 184-residue chain is ATP synthase subunit b, chloroplastic (184 aa).

Residues 27–49 (LATNLINLSVVLGVLIFFGKGVL) form a helical membrane-spanning segment.

The protein belongs to the ATPase B chain family. F-type ATPases have 2 components, F(1) - the catalytic core - and F(0) - the membrane proton channel. F(1) has five subunits: alpha(3), beta(3), gamma(1), delta(1), epsilon(1). F(0) has four main subunits: a(1), b(1), b'(1) and c(10-14). The alpha and beta chains form an alternating ring which encloses part of the gamma chain. F(1) is attached to F(0) by a central stalk formed by the gamma and epsilon chains, while a peripheral stalk is formed by the delta, b and b' chains.

It is found in the plastid. The protein resides in the chloroplast thylakoid membrane. Its function is as follows. F(1)F(0) ATP synthase produces ATP from ADP in the presence of a proton or sodium gradient. F-type ATPases consist of two structural domains, F(1) containing the extramembraneous catalytic core and F(0) containing the membrane proton channel, linked together by a central stalk and a peripheral stalk. During catalysis, ATP synthesis in the catalytic domain of F(1) is coupled via a rotary mechanism of the central stalk subunits to proton translocation. Component of the F(0) channel, it forms part of the peripheral stalk, linking F(1) to F(0). In Nymphaea alba (White water-lily), this protein is ATP synthase subunit b, chloroplastic.